A 208-amino-acid chain; its full sequence is uncharacterized protein (208 aa).

Positions 126 to 151 are disordered; the sequence is VGSGSGSDSSSGSTSSPNTVNNYNSD. The segment covering 131 to 141 has biased composition (low complexity); that stretch reads GSDSSSGSTSS.

This is an uncharacterized protein from Dictyostelium discoideum (Social amoeba).